The following is a 456-amino-acid chain: Protein shifted (456 aa).

Positions 1–30 are cleaved as a signal peptide; the sequence is MTHQGIGCLVKWLYLVLIVHTLLCIGQLEC. The interval 34 to 112 is disordered; sequence HHNRNNNNNN…GGGGSRHNRN (79 aa). Positions 44-55 are enriched in basic and acidic residues; sequence RRADSSSSEEGH. A glycan (N-linked (GlcNAc...) asparagine) is linked at N57. Basic residues predominate over residues 77–87; the sequence is HQPRRGQRKKQ. Positions 88–107 are enriched in gly residues; sequence QGGGGGGSGGGGGNGGGGGS. The WIF domain maps to 119–261; sequence LWINEQQLKM…PIRLNFKKEC (143 aa). N-linked (GlcNAc...) asparagine glycosylation is found at N173, N217, and N227. Intrachain disulfides connect C224/C261, C283/C293, C287/C299, C301/C310, C315/C325, C319/C331, C333/C342, C347/C357, C351/C363, C365/C374, C379/C389, C383/C395, C397/C406, C416/C423, C418/C429, and C431/C440. EGF-like domains follow at residues 279–311, 315–342, 343–375, 376–407, and 412–441; these read TLQE…QYCE, CFPQ…GTQC, EGGI…LRCE, YSKC…DHCE, and QRSI…RHCN. A glycan (N-linked (GlcNAc...) asparagine) is linked at N324. Residue N420 is glycosylated (N-linked (GlcNAc...) asparagine).

Interacts with hh. In terms of tissue distribution, at the blastoderm stage, it is ubiquitously expressed. As embryogenesis continues, it is expressed in the epidermis and central nervous system, this expression being segmentally modulated. Also highly expressed at the foregut and hindgut throughout embryogenesis. In third instar wing imaginal disks, it is highly expressed in the most anterior and posterior parts of the disk and weakly expressed at the antero/posterior (A/P) compartment border. In the leg disks and the antenna part of the eye-antennal imaginal disk it is also weakly expressed at the A/P compartment border. Weakly expressed in the morphogenetic furrow in the eye primordium.

The protein localises to the secreted. It is found in the extracellular space. Its subcellular location is the extracellular matrix. Required for normal accumulation and movement of lipid-modified hedgehog (hh) morphogen. May act by stabilizing the interaction between heparan sulfate proteoglycans (HSPGs) and hh, HSPGs being required for diffusion of hh morphogen. Not involved in wingless (wg) morphogen movement, suggesting that it may provide HSPG specificity for Hh. This chain is Protein shifted (shf), found in Drosophila melanogaster (Fruit fly).